Reading from the N-terminus, the 718-residue chain is Threonine--tRNA ligase, mitochondrial (718 aa).

Phosphoserine is present on serine 52. The TGS domain maps to 55–121 (QKEPRTIKIS…ETDSDLRFLT (67 aa)).

Belongs to the class-II aminoacyl-tRNA synthetase family. As to quaternary structure, homodimer.

Its subcellular location is the mitochondrion matrix. The catalysed reaction is tRNA(Thr) + L-threonine + ATP = L-threonyl-tRNA(Thr) + AMP + diphosphate + H(+). Its function is as follows. Catalyzes the attachment of threonine to tRNA(Thr) in a two-step reaction: threonine is first activated by ATP to form Thr-AMP and then transferred to the acceptor end of tRNA(Thr). Also edits incorrectly charged tRNA(Thr) via its editing domain. The protein is Threonine--tRNA ligase, mitochondrial (TARS2) of Homo sapiens (Human).